We begin with the raw amino-acid sequence, 94 residues long: Putative septation protein SpoVG (94 aa).

It belongs to the SpoVG family.

Could be involved in septation. This Acetivibrio thermocellus (strain ATCC 27405 / DSM 1237 / JCM 9322 / NBRC 103400 / NCIMB 10682 / NRRL B-4536 / VPI 7372) (Clostridium thermocellum) protein is Putative septation protein SpoVG.